A 396-amino-acid chain; its full sequence is Elongation factor Tu (396 aa).

Residues 10 to 206 (KPHVNIGTIG…AVDAYIPEPE (197 aa)) form the tr-type G domain. Residues 19–26 (GHVDHGKT) form a G1 region. 19-26 (GHVDHGKT) contacts GTP. Threonine 26 contributes to the Mg(2+) binding site. The interval 60 to 64 (GITIS) is G2. The interval 81-84 (DCPG) is G3. GTP contacts are provided by residues 81–85 (DCPGH) and 136–139 (NKVD). The segment at 136–139 (NKVD) is G4. The segment at 174–176 (SAL) is G5.

It belongs to the TRAFAC class translation factor GTPase superfamily. Classic translation factor GTPase family. EF-Tu/EF-1A subfamily. In terms of assembly, monomer.

The protein resides in the cytoplasm. It catalyses the reaction GTP + H2O = GDP + phosphate + H(+). Its function is as follows. GTP hydrolase that promotes the GTP-dependent binding of aminoacyl-tRNA to the A-site of ribosomes during protein biosynthesis. This is Elongation factor Tu from Magnetococcus marinus (strain ATCC BAA-1437 / JCM 17883 / MC-1).